A 470-amino-acid chain; its full sequence is Uronate isomerase (470 aa).

The protein belongs to the metallo-dependent hydrolases superfamily. Uronate isomerase family.

The enzyme catalyses D-glucuronate = D-fructuronate. It catalyses the reaction aldehydo-D-galacturonate = keto-D-tagaturonate. It participates in carbohydrate metabolism; pentose and glucuronate interconversion. The protein is Uronate isomerase of Salmonella arizonae (strain ATCC BAA-731 / CDC346-86 / RSK2980).